A 310-amino-acid chain; its full sequence is Porphobilinogen deaminase (310 aa).

Cys243 is subject to S-(dipyrrolylmethanemethyl)cysteine.

The protein belongs to the HMBS family. As to quaternary structure, monomer. It depends on dipyrromethane as a cofactor.

The enzyme catalyses 4 porphobilinogen + H2O = hydroxymethylbilane + 4 NH4(+). It functions in the pathway porphyrin-containing compound metabolism; protoporphyrin-IX biosynthesis; coproporphyrinogen-III from 5-aminolevulinate: step 2/4. Tetrapolymerization of the monopyrrole PBG into the hydroxymethylbilane pre-uroporphyrinogen in several discrete steps. This is Porphobilinogen deaminase from Methylobacillus flagellatus (strain ATCC 51484 / DSM 6875 / VKM B-1610 / KT).